The chain runs to 394 residues: DNA repair protein brc-2 (394 aa).

Residues 1 to 12 show a composition bias toward basic and acidic residues; sequence MGDSSKKVKDSF. Disordered regions lie at residues 1–30 and 56–136; these read MGDS…VPIS and MLNS…EKKK. Residues 1-60 are interaction with rad-51; that stretch reads MGDSSKKVKDSFDTISEPDSFDEPKGVPISMEPVFSTAAGIRIDVKQESIDKSKKMLNSD. The interval 28–62 is BRCA2 repeat-like region; it reads PISMEPVFSTAAGIRIDVKQESIDKSKKMLNSDLK. Low complexity predominate over residues 56–73; it reads MLNSDLKSKSSSKGGFSS. The interval 60–89 is interaction with rad-51-DNA complexes; that stretch reads DLKSKSSSKGGFSSPLVRKNNGSSAFVSPF. Residues 124–134 show a composition bias toward basic residues; that stretch reads KKSKKHSKKEK. Positions 371-389 are required for ssDNA binding; the sequence is WKDFGSYLKHKEDKKKRRS.

As to quaternary structure, interacts (via N-terminus) with rad-51; regulates rad-51 recruitment to sites of DNA double strand breaks. In terms of tissue distribution, expressed in the germline, with highest expression in cells undergoing oogenesis.

The protein resides in the nucleus. It is found in the chromosome. Functionally, required for the homologous recombination repair of DNA double strand breaks, thereby playing a role in chromosome integrity. Acts by targeting rad-51 to sites of DNA damage and stabilizing rad-51-DNA filaments by blocking ATP hydrolysis catalyzed by rad-51. Promotes rad-51 mediated displacement-loop (D-loop) formation during strand invasion between the invading single-stranded DNA (ssDNA) and the homologous duplex DNA. Also functions independently of rad-51 in DNA double-strand break (DSB) repair by promoting DNA single-strand annealing (SSA) when the homologous recombination (HR) and non-homologous end joining (NHEJ) pathways are compromised. Binds selectively to single-stranded (ssDNA) via its C-terminus. Involved in telomere maintenance and replicative senescence. The sequence is that of DNA repair protein brc-2 from Caenorhabditis elegans.